Reading from the N-terminus, the 445-residue chain is Peptide chain release factor 1, mitochondrial (445 aa).

The transit peptide at 1-61 (MNRHLCVWLF…LLSKNWSRRY (61 aa)) directs the protein to the mitochondrion. A GGQ domain region spans residues 297–361 (PKDLRIDTFR…LRARLYQQII (65 aa)). Positions 311–313 (GGQ) match the GGQ motif. N5-methylglutamine is present on Gln313.

It belongs to the prokaryotic/mitochondrial release factor family. In terms of processing, methylation of glutamine in the GGQ triplet by HEMK1 is conserved from bacteria to mammals.

The protein localises to the mitochondrion. Its function is as follows. Mitochondrial peptide chain release factor that directs the termination of translation in response to the peptide chain non-canonical stop codons AGG and AGA. Non-canonical termination codons AGG and AGA are found at the end of MT-CO1/COX1 and MT-ND6/ND6 open reading frames, respectively. Recognizes non-canonical stop codons via a network of interactions between the codon, MTRF1 and the ribosomal RNA (rRNA): in contrast to other translation release factors, which identify the codon in the A-site via direct interactions of amino acid side chains with the bases, MTRF1 repositions the first 2 bases of the stop codon to use an intricate network of interactions that includes residues of the release factor, the rRNA of the small ribosomal subunit, as well as neighboring bases of the mRNA. The chain is Peptide chain release factor 1, mitochondrial from Homo sapiens (Human).